A 241-amino-acid polypeptide reads, in one-letter code: Probable transcriptional regulatory protein lmo1535 (241 aa).

Polar residues predominate over residues 1 to 14; that stretch reads MSGHSKWNNIQGRK. The tract at residues 1 to 22 is disordered; that stretch reads MSGHSKWNNIQGRKNAQDSKRS.

The protein belongs to the TACO1 family.

The protein resides in the cytoplasm. This chain is Probable transcriptional regulatory protein lmo1535, found in Listeria monocytogenes serovar 1/2a (strain ATCC BAA-679 / EGD-e).